The sequence spans 306 residues: Myb family transcription factor MOF1 (306 aa).

Residues 19 to 79 form the HTH myb-type domain; it reads RSKVPRLRWT…HLQMYRCSRL (61 aa). The segment at residues 50–75 is a DNA-binding region (H-T-H motif); that stretch reads PKLILQLMGVKGLTISHVKSHLQMYR.

In terms of assembly, interacts with TPR1, TPR2 and TPR3. In terms of tissue distribution, expressed in roots, leaves, leaf sheaths, culms, panicles, lemmas, paleas, lodicules, stamens, and pistils.

The protein localises to the nucleus. In terms of biological role, transcriptional repressor that plays a role in the regulation of organ identity and spikelet meristem determinacy. Interacts with the TPR corepressors to possibly repress the expression of downstream target genes. This chain is Myb family transcription factor MOF1, found in Oryza sativa subsp. japonica (Rice).